The sequence spans 629 residues: MKSNYDVIVVGGGHAGVEAALASARLNKKTALINLYEDKIATMPCNPSVGGPAKGIVVREIDALGGEMAKAADATALQTKLLNSSRGPGVWALRVQSDKEEYSKYMRNVIKNQKNLDLITRACTGLVYDENKTVTGIYLDDQTILNAKAVIITTGTYLKSEILKGVDRYESGPNNEKTTKGISQSLIDLGIKLMRFKTGTPARVYRDSVDLSNAVLEPGTDMKLAFSFSTSTYTPIEKQQPCYLIHSTLETKKIIEDNLEKSAMYSGTVKSIGPRYCPSFEDKAVRFREKDTHQIFIEPETLNGDTWYVQGFSTSMPIEVQEMMLKSLPGFENVRVKHWAYAIEYDCIDPMQLSPSLELKDVKNLFTAGQINGTSGYEEAAGQGLIAGINASRKIDGLDPIILRRDEAYIGVMIDDLINKGVWEPYRLLTSRAEHRLLLRNDNAETRLKQYGKEIGLISDQEWNQYLIYVKEIEQAIKELKEIRFTPKSQLAINLKNKNQADLSHGYSGYEIIKIPTVDINELIEFIPSLQKLKTNQLQSIVIEIRFEGYVKKERQLVDKLVKLERKKIPLDINYSKVDNLATEAKDKLEKIRPLNIGQASRITGVNPADIQMLLFYLKKQYPLENIDN.

11-16 (GGGHAG) is an FAD binding site. An NAD(+)-binding site is contributed by 273–287 (GPRYCPSFEDKAVRF).

It belongs to the MnmG family. In terms of assembly, homodimer. Heterotetramer of two MnmE and two MnmG subunits. It depends on FAD as a cofactor.

Its subcellular location is the cytoplasm. In terms of biological role, NAD-binding protein involved in the addition of a carboxymethylaminomethyl (cmnm) group at the wobble position (U34) of certain tRNAs, forming tRNA-cmnm(5)s(2)U34. In Mycoplasma mycoides subsp. mycoides SC (strain CCUG 32753 / NCTC 10114 / PG1), this protein is tRNA uridine 5-carboxymethylaminomethyl modification enzyme MnmG.